Here is a 131-residue protein sequence, read N- to C-terminus: Global transcriptional regulator Spx (131 aa).

C10 and C13 are oxidised to a cystine.

Belongs to the ArsC family. Spx subfamily. In terms of assembly, interacts with the C-terminal domain of the alpha subunit of the RNAP.

It is found in the cytoplasm. Under non-stress conditions, Spx is degraded by ClpXP. Efficient degradation by ClpXP requires the adapter protein SpxH/YjbH. Function, levels and solubility of Spx are affected by SpxH/YjbH aggregation and stress conditions. Functionally, global transcriptional regulator that plays a key role in stress response and exerts either positive or negative regulation of genes. Acts by interacting with the C-terminal domain of the alpha subunit of the RNA polymerase (RNAP). This interaction can enhance binding of RNAP to the promoter region of target genes and stimulate their transcription, or block interaction of RNAP with activator proteins and repress transcription. Required for transcription of thioredoxin reductase (trxB). Modulates the expression of icaR, encoding a repressor of the biofilm operon icaADBC. Also controls the transcription of trfA, a gene implicated in cell wall antibiotic resistance, which in turn is required for degradation of MazE antitoxin, the unstable component of the MazEF toxin-antitoxin system, that neutralizes the endoribonuclease activity of MazF toxin. The polypeptide is Global transcriptional regulator Spx (Staphylococcus aureus (strain NCTC 8325 / PS 47)).